Consider the following 554-residue polypeptide: Formate--tetrahydrofolate ligase (554 aa).

Position 64-71 (64-71 (TPAGEGKS)) interacts with ATP.

Belongs to the formate--tetrahydrofolate ligase family.

The catalysed reaction is (6S)-5,6,7,8-tetrahydrofolate + formate + ATP = (6R)-10-formyltetrahydrofolate + ADP + phosphate. It functions in the pathway one-carbon metabolism; tetrahydrofolate interconversion. The polypeptide is Formate--tetrahydrofolate ligase (Leuconostoc citreum (strain KM20)).